We begin with the raw amino-acid sequence, 660 residues long: Polyadenylate-binding protein 3 (660 aa).

RRM domains lie at 49-126 (SSLY…LSNR), 136-213 (GNIF…HFIR), 229-306 (TNVY…RAQK), and 332-409 (ANLY…LAQR). Residues 571–648 (PISKLTSSLA…ALDVLRLSVD (78 aa)) form the PABC domain.

It belongs to the polyadenylate-binding protein type-1 family. As to expression, expressed predominantly in immature flowers. Detected in tapetum and pollen. Strongly expressed in immatures siliques.

Its subcellular location is the cytoplasm. It is found in the nucleus. Its function is as follows. Binds the poly(A) tail of mRNA. Appears to be an important mediator of the multiple roles of the poly(A) tail in mRNA biogenesis, stability and translation. In the cytoplasm, affects both translation and mRNA decay. Inhibits the polyadenylated RNA degradation by the Rrp41p 3'--&gt;5' exonuclease in vitro. Binds with the 5'UTRs of PAB2, PAB3 and with a lower affinity with the 5'UTR of PAB5. This is Polyadenylate-binding protein 3 (PAB3) from Arabidopsis thaliana (Mouse-ear cress).